We begin with the raw amino-acid sequence, 199 residues long: Cytochrome c oxidase assembly protein CtaG (199 aa).

At 1–12 the chain is on the cytoplasmic side; that stretch reads MTNTPQTPPKER. The helical; Signal-anchor for type II membrane protein transmembrane segment at 13–35 threads the bilayer; it reads ANGVIVGACLAFVAGMVGMAYAA. Residues 36–199 lie on the Periplasmic side of the membrane; sequence VPLYDMFCRV…VKDGETENRL (164 aa).

This sequence belongs to the COX11/CtaG family.

The protein resides in the cell inner membrane. Functionally, exerts its effect at some terminal stage of cytochrome c oxidase synthesis, probably by being involved in the insertion of the copper B into subunit I. This Sinorhizobium fredii (strain NBRC 101917 / NGR234) protein is Cytochrome c oxidase assembly protein CtaG.